The following is a 586-amino-acid chain: Protein cereblon (586 aa).

2 disordered regions span residues 1 to 114 (MDDE…LPRW) and 158 to 194 (SQER…IDIG). Basic and acidic residues predominate over residues 14 to 37 (GRDEDVQLEDHSQAQGLQDRRVDA). Acidic residues predominate over residues 75 to 85 (MVEDGLQDDTA). Residues 86–96 (SEGSHPSSDMS) show a composition bias toward polar residues. The segment covering 159–168 (QERRRSRTSE) has biased composition (basic and acidic residues). Over residues 170-179 (TSQEDVEQPE) the composition is skewed to acidic residues. Pro residues predominate over residues 180 to 190 (DPPPQQPPRPP). Residues 226–452 (HMLIFLHQHI…LIKSTFTDES (227 aa)) form the Lon N-terminal domain. The region spanning 451 to 560 (ESLFFCRYCN…LAGSSVRIGK (110 aa)) is the CULT domain. Zn(2+)-binding residues include Cys456, Cys459, Cys525, and Cys528.

It belongs to the CRBN family. In terms of assembly, likely a component of a DCX (DDB1-CUL4-X-box) protein ligase complex. May interact with pic/DDB1. In terms of processing, ubiquitinated.

Its subcellular location is the nucleus. It functions in the pathway protein modification; protein ubiquitination. Substrate recognition component of a DCX (DDB1-CUL4-X-box) E3 protein ligase complex that mediates the ubiquitination and subsequent proteasomal degradation of target proteins. Has an essential role in mediating growth by negatively regulating insulin signaling. It also has a role in maintaining presynaptic function in the neuromuscular junction synapses of third-instar larvae. The protein is Protein cereblon of Drosophila erecta (Fruit fly).